A 99-amino-acid chain; its full sequence is Nucleoid-associated protein EbfC (99 aa).

Belongs to the YbaB/EbfC family. Homodimer.

Its subcellular location is the cytoplasm. It is found in the nucleoid. Functionally, binds to DNA and alters its conformation. May be involved in regulation of gene expression, nucleoid organization and DNA protection. The polypeptide is Nucleoid-associated protein EbfC (Borreliella burgdorferi (strain ZS7) (Borrelia burgdorferi)).